Consider the following 432-residue polypeptide: Alpha-galactosidase (432 aa).

Position 2-68 (2-68 (KKITFIGAGS…PSVAINSYDD (67 aa))) interacts with NAD(+). A substrate-binding site is contributed by asparagine 148. Cysteine 169 lines the Mn(2+) pocket. The Proton donor role is filled by histidine 170. Residue histidine 199 coordinates Mn(2+).

It belongs to the glycosyl hydrolase 4 family. As to quaternary structure, homodimer. The cofactor is Mn(2+). It depends on NAD(+) as a cofactor.

The protein localises to the cytoplasm. The catalysed reaction is Hydrolysis of terminal, non-reducing alpha-D-galactose residues in alpha-D-galactosides, including galactose oligosaccharides, galactomannans and galactolipids.. Functionally, catalyzes the hydrolysis of melibiose and alpha-galactosides of the raffinose family of oligosaccharides (RFOs) such as raffinose and stachyose. Cannot act on polymeric substrates such as locust bean gum. In Bacillus subtilis (strain 168), this protein is Alpha-galactosidase.